The chain runs to 168 residues: Prespore-specific protein A (168 aa).

A signal peptide spans 1-19 (MKFQHTFIALLSLLTYANA). O-linked (GlcNAc) threonine glycosylation is found at threonine 110, threonine 114, threonine 116, threonine 118, threonine 120, threonine 122, threonine 124, threonine 126, threonine 128, threonine 130, threonine 132, threonine 134, and threonine 138. Repeat copies occupy residues 116 to 119 (TPTV), 120 to 123 (TPTV), and 124 to 127 (TPTV). Positions 116-127 (TPTVTPTVTPTV) are 3 X 4 AA tandem repeats of T-P-T-V. A compositionally biased stretch (low complexity) spans 116 to 131 (TPTVTPTVTPTVTPTP). The disordered stretch occupies residues 116 to 147 (TPTVTPTVTPTVTPTPTNTPNPTPSQTSTTTG). Serine 140 carries an O-linked (GlcNAc) serine glycan. Residue glycine 147 is the site of GPI-like-anchor amidated glycine attachment. Residues 148-168 (SASTVVASLSLIIFSMILSLC) constitute a propeptide, removed in mature form.

It belongs to the ponticulin family. In terms of processing, O-glycosylated in the repeat region. The oligosaccharides contain N-acetylglucosamine and fucose as the major constituents. Post-translationally, the GPI-like-anchor contains a phosphoceramide group, rather than a phosphatidyl group.

The protein resides in the cell membrane. May bind F-actin and nucleates actin assembly. This chain is Prespore-specific protein A (pspA), found in Dictyostelium discoideum (Social amoeba).